The chain runs to 83 residues: Cell division topological specificity factor (83 aa).

The protein belongs to the MinE family.

Prevents the cell division inhibition by proteins MinC and MinD at internal division sites while permitting inhibition at polar sites. This ensures cell division at the proper site by restricting the formation of a division septum at the midpoint of the long axis of the cell. The polypeptide is Cell division topological specificity factor (Acidithiobacillus ferrooxidans (strain ATCC 23270 / DSM 14882 / CIP 104768 / NCIMB 8455) (Ferrobacillus ferrooxidans (strain ATCC 23270))).